The following is a 306-amino-acid chain: MPAVAPSAAESRHSNTFLRLKKKLERGVGEAIADYNMIGDGDTVMVCVSGGKDSYTLLSCLLALRERAPVDFRIVAMNLDQKQPGFPDDVLPAYFESIGVEYRIVTEDTYSIVKDKIPEGKTTCSLCSRLRRGIIYRTAKEIGATRIALGHHRDDMLETLFLNMFFGGKIKAMPPKLVSDDGQHVVIRPLAYCTENDIERFARGMDFPIIPCNLCGSQENAQRKQIKTMLQGWARDYPGRIESLATSLRNVVPSHLSDSALFDFVGLTRDTRVGEGDTVFDPPELPAAAAPITLRRADDDGDRSAT.

A PP-loop motif motif is present at residues 49-54 (SGGKDS). 3 residues coordinate [4Fe-4S] cluster: cysteine 124, cysteine 127, and cysteine 215.

Belongs to the TtcA family. As to quaternary structure, homodimer. The cofactor is Mg(2+). [4Fe-4S] cluster serves as cofactor.

It is found in the cytoplasm. The enzyme catalyses cytidine(32) in tRNA + S-sulfanyl-L-cysteinyl-[cysteine desulfurase] + AH2 + ATP = 2-thiocytidine(32) in tRNA + L-cysteinyl-[cysteine desulfurase] + A + AMP + diphosphate + H(+). The protein operates within tRNA modification. Its function is as follows. Catalyzes the ATP-dependent 2-thiolation of cytidine in position 32 of tRNA, to form 2-thiocytidine (s(2)C32). The sulfur atoms are provided by the cysteine/cysteine desulfurase (IscS) system. This Azoarcus sp. (strain BH72) protein is tRNA-cytidine(32) 2-sulfurtransferase.